A 291-amino-acid chain; its full sequence is MALAARLLPQFLHSRSLPCGAVRLRTPAVAEVRLPSATLCYFCRCRLGLGAALFPRSARALAASALPAQGSRWPVLSSPGLPAAFASFPACPQRSYSTEEKPQQHQKTKMIVLGFSNPINWVRTRIKAFLIWAYFDKEFSITEFSEGAKQAFAHVSKLLSQCKFDLLEELVAKEVLHALKEKVTSLPDNHKNALAANIDEIVFTSTGDISIYYDEKGRKFVNILMCFWYLTSANIPSETLRGASVFQVKLGNQNVETKQLLSASYEFQREFTQGVKPDWTIARIEHSKLLE.

The N-terminal 96 residues, 1–96, are a transit peptide targeting the mitochondrion; that stretch reads MALAARLLPQ…SFPACPQRSY (96 aa).

In terms of assembly, interacts with AFG3L2. Interacts with SPG7. Interacts with SMDT1/EMRE (via the N-terminal transit peptide); interaction is direct and takes place before maturation of SMDT1/EMRE.

It localises to the mitochondrion matrix. In terms of biological role, promotes sorting of SMDT1/EMRE in mitochondria by ensuring its maturation. Interacts with the transit peptide region of SMDT1/EMRE precursor protein in the mitochondrial matrix, leading to protect it against protein degradation by YME1L1, thereby ensuring SMDT1/EMRE maturation by the mitochondrial processing peptidase (PMPCA and PMPCB). This Homo sapiens (Human) protein is m-AAA protease-interacting protein 1, mitochondrial.